Reading from the N-terminus, the 941-residue chain is Myosin heavy chain kinase D (941 aa).

The stretch at Lys-8–Leu-48 forms a coiled coil. 3 stretches are compositionally biased toward low complexity: residues Thr-57–Thr-70, Thr-84–Ser-115, and Asn-124–Ser-206. Disordered regions lie at residues Thr-57–Ser-234 and Ser-276–Gln-310. Residues Ser-289 to Thr-317 adopt a coiled-coil conformation. The Alpha-type protein kinase domain maps to Glu-337–Ile-582. 7 WD repeats span residues Gly-635–Lys-674, Ala-683–Thr-720, Asp-741–Ser-780, Ala-783–Gly-820, Ala-824–Thr-861, Gln-864–Lys-902, and Ala-909–Lys-941.

It belongs to the protein kinase superfamily. Alpha-type protein kinase family. ALPK subfamily.

The enzyme catalyses L-threonyl-[myosin heavy-chain] + ATP = O-phospho-L-threonyl-[myosin heavy-chain] + ADP + H(+). In terms of biological role, phosphorylates threonine. Not critical for regulating the assembly and disassembly of myosin II filament. This chain is Myosin heavy chain kinase D (mhkD), found in Dictyostelium discoideum (Social amoeba).